The sequence spans 1182 residues: DNA-directed RNA polymerase subunit beta' (1182 aa).

Zn(2+)-binding residues include Cys-59, Cys-61, Cys-74, and Cys-77. 3 residues coordinate Mg(2+): Asp-449, Asp-451, and Asp-453. Zn(2+) contacts are provided by Cys-794, Cys-868, Cys-875, and Cys-878.

The protein belongs to the RNA polymerase beta' chain family. The RNAP catalytic core consists of 2 alpha, 1 beta, 1 beta' and 1 omega subunit. When a sigma factor is associated with the core the holoenzyme is formed, which can initiate transcription. The cofactor is Mg(2+). Requires Zn(2+) as cofactor.

It catalyses the reaction RNA(n) + a ribonucleoside 5'-triphosphate = RNA(n+1) + diphosphate. DNA-dependent RNA polymerase catalyzes the transcription of DNA into RNA using the four ribonucleoside triphosphates as substrates. This is DNA-directed RNA polymerase subunit beta' from Clostridium acetobutylicum (strain ATCC 824 / DSM 792 / JCM 1419 / IAM 19013 / LMG 5710 / NBRC 13948 / NRRL B-527 / VKM B-1787 / 2291 / W).